The sequence spans 293 residues: Ribosomal protein L11 methyltransferase (293 aa).

4 residues coordinate S-adenosyl-L-methionine: Thr-145, Gly-166, Asp-188, and Asn-230.

Belongs to the methyltransferase superfamily. PrmA family.

The protein localises to the cytoplasm. The enzyme catalyses L-lysyl-[protein] + 3 S-adenosyl-L-methionine = N(6),N(6),N(6)-trimethyl-L-lysyl-[protein] + 3 S-adenosyl-L-homocysteine + 3 H(+). In terms of biological role, methylates ribosomal protein L11. The sequence is that of Ribosomal protein L11 methyltransferase from Edwardsiella ictaluri (strain 93-146).